Reading from the N-terminus, the 390-residue chain is DNA primase small subunit PriS (390 aa).

Residues Asp-98, Asp-100, and Asp-296 contribute to the active site.

It belongs to the eukaryotic-type primase small subunit family. Heterodimer of a small subunit (PriS) and a large subunit (PriL). It depends on Mg(2+) as a cofactor. Requires Mn(2+) as cofactor.

Catalytic subunit of DNA primase, an RNA polymerase that catalyzes the synthesis of short RNA molecules used as primers for DNA polymerase during DNA replication. The small subunit contains the primase catalytic core and has DNA synthesis activity on its own. Binding to the large subunit stabilizes and modulates the activity, increasing the rate of DNA synthesis while decreasing the length of the DNA fragments, and conferring RNA synthesis capability. The DNA polymerase activity may enable DNA primase to also catalyze primer extension after primer synthesis. May also play a role in DNA repair. In Methanococcoides burtonii (strain DSM 6242 / NBRC 107633 / OCM 468 / ACE-M), this protein is DNA primase small subunit PriS.